Reading from the N-terminus, the 432-residue chain is Adenylosuccinate synthetase (432 aa).

Residues 12–18 (GDEGKGK) and 40–42 (GHT) each bind GTP. Aspartate 13 acts as the Proton acceptor in catalysis. Residues aspartate 13 and glycine 40 each coordinate Mg(2+). IMP is bound by residues 13-16 (DEGK), 38-41 (NAGH), threonine 129, arginine 143, glutamine 224, threonine 239, and arginine 303. Catalysis depends on histidine 41, which acts as the Proton donor. 299-305 (VTTGRRR) contributes to the substrate binding site. Residues arginine 305, 331–333 (KLD), and 413–415 (GVG) contribute to the GTP site.

This sequence belongs to the adenylosuccinate synthetase family. In terms of assembly, homodimer. Requires Mg(2+) as cofactor.

The protein localises to the cytoplasm. The catalysed reaction is IMP + L-aspartate + GTP = N(6)-(1,2-dicarboxyethyl)-AMP + GDP + phosphate + 2 H(+). It participates in purine metabolism; AMP biosynthesis via de novo pathway; AMP from IMP: step 1/2. In terms of biological role, plays an important role in the de novo pathway of purine nucleotide biosynthesis. Catalyzes the first committed step in the biosynthesis of AMP from IMP. This Mycolicibacterium paratuberculosis (strain ATCC BAA-968 / K-10) (Mycobacterium paratuberculosis) protein is Adenylosuccinate synthetase.